The sequence spans 1040 residues: Multidrug resistance protein MdtB (1040 aa).

A run of 12 helical transmembrane segments spans residues 16–36, 347–367, 369–389, 396–416, 440–460, 472–492, 537–557, 863–883, 888–908, 911–931, 968–988, and 998–1018; these read FILR…AGII, LMLA…NIPA, IIPA…MVFL, LTLM…IVVI, IGFT…PLLF, FAVT…TLTP, WLTL…WIFI, LGST…VLGV, FIHP…ALLA, IAGA…IGIV, ILMT…STGV, and IGMV…TPVI.

The protein belongs to the resistance-nodulation-cell division (RND) (TC 2.A.6) family. MdtB subfamily. Part of a tripartite efflux system composed of MdtA, MdtB and MdtC. MdtB forms a heteromultimer with MdtC.

The protein localises to the cell inner membrane. The sequence is that of Multidrug resistance protein MdtB from Cronobacter sakazakii (strain ATCC BAA-894) (Enterobacter sakazakii).